Here is a 237-residue protein sequence, read N- to C-terminus: Ras-related protein Rab-33A (237 aa).

Asparagine 46, valine 47, glycine 48, lysine 49, threonine 50, cysteine 51, threonine 65, and threonine 68 together coordinate GTP. Residue threonine 50 coordinates Mg(2+). A Switch 1 motif is present at residues 59 to 71; it reads GTFPDKTEATIGV. Threonine 68 and aspartate 91 together coordinate Mg(2+). The Switch 2 motif lies at 92–111; that stretch reads TAGQERFRKSMVEHYYRNVH. Residues glycine 94, asparagine 151, lysine 152, aspartate 154, alanine 182, and lysine 183 each contribute to the GTP site. S-geranylgeranyl cysteine attachment occurs at residues cysteine 235 and cysteine 237. Cysteine 237 carries the cysteine methyl ester modification.

It belongs to the small GTPase superfamily. Rab family. Interacts with ATG16L1; the interaction is important for autophagosome formation. Requires Mg(2+) as cofactor. Expressed predominantly in brain. Weak expression in ovary.

It is found in the cell membrane. It catalyses the reaction GTP + H2O = GDP + phosphate + H(+). Regulated by guanine nucleotide exchange factors (GEFs) which promote the exchange of bound GDP for free GTP. Regulated by GTPase activating proteins (GAPs) which increase the GTP hydrolysis activity. Inhibited by GDP dissociation inhibitors (GDIs). Its function is as follows. The small GTPases Rab are key regulators of intracellular membrane trafficking, from the formation of transport vesicles to their fusion with membranes. Rabs cycle between an inactive GDP-bound form and an active GTP-bound form that is able to recruit to membranes different sets of downstream effectors directly responsible for vesicle formation, movement, tethering and fusion. Modulates autophagosome formation through interaction with ATG16L1. The chain is Ras-related protein Rab-33A from Mus musculus (Mouse).